The chain runs to 83 residues: Keratin-associated protein 6-1 (83 aa).

One copy of the RPT 1-1 repeat lies at 9–15 (YGGLGCG). The stretch at 19–25 (YGGLGCG) is one RPT 1-2 repeat. An RPT 2-1 repeat occupies 44 to 55 (GYGYGSRSLCGS). The RPT 2-2 repeat unit spans residues 56 to 67 (GYGYGSRSLCGS).

Belongs to the KRTAP type 6 family. Interacts with wool keratins.

In terms of biological role, in the wool cortex, wool keratin intermediate filaments are embedded in an interfilamentous matrix, consisting of hair keratin-associated proteins (KRTAP), which are essential for the formation of a rigid and resistant wool shaft through their extensive disulfide bond cross-linking with abundant cysteine residues of wool keratins. The matrix proteins include the high-sulfur and high-glycine-tyrosine keratins. The polypeptide is Keratin-associated protein 6-1 (KRTAP6-1) (Ovis aries (Sheep)).